The primary structure comprises 151 residues: SsrA-binding protein (151 aa).

This sequence belongs to the SmpB family.

The protein localises to the cytoplasm. Functionally, required for rescue of stalled ribosomes mediated by trans-translation. Binds to transfer-messenger RNA (tmRNA), required for stable association of tmRNA with ribosomes. tmRNA and SmpB together mimic tRNA shape, replacing the anticodon stem-loop with SmpB. tmRNA is encoded by the ssrA gene; the 2 termini fold to resemble tRNA(Ala) and it encodes a 'tag peptide', a short internal open reading frame. During trans-translation Ala-aminoacylated tmRNA acts like a tRNA, entering the A-site of stalled ribosomes, displacing the stalled mRNA. The ribosome then switches to translate the ORF on the tmRNA; the nascent peptide is terminated with the 'tag peptide' encoded by the tmRNA and targeted for degradation. The ribosome is freed to recommence translation, which seems to be the essential function of trans-translation. This is SsrA-binding protein from Chlamydia pneumoniae (Chlamydophila pneumoniae).